The chain runs to 496 residues: Glycerol kinase (496 aa).

Threonine 11 lines the ADP pocket. Residues threonine 11, threonine 12, and serine 13 each coordinate ATP. Position 11 (threonine 11) interacts with sn-glycerol 3-phosphate. Arginine 15 contacts ADP. Sn-glycerol 3-phosphate-binding residues include arginine 81, glutamate 82, tyrosine 133, and aspartate 242. Positions 81, 82, 133, 242, and 243 each coordinate glycerol. Residues threonine 264 and glycine 307 each coordinate ADP. 4 residues coordinate ATP: threonine 264, glycine 307, glutamine 311, and glycine 408. 2 residues coordinate ADP: glycine 408 and asparagine 412.

Belongs to the FGGY kinase family.

The enzyme catalyses glycerol + ATP = sn-glycerol 3-phosphate + ADP + H(+). It participates in polyol metabolism; glycerol degradation via glycerol kinase pathway; sn-glycerol 3-phosphate from glycerol: step 1/1. Inhibited by fructose 1,6-bisphosphate (FBP). Key enzyme in the regulation of glycerol uptake and metabolism. Catalyzes the phosphorylation of glycerol to yield sn-glycerol 3-phosphate. The chain is Glycerol kinase from Trichlorobacter lovleyi (strain ATCC BAA-1151 / DSM 17278 / SZ) (Geobacter lovleyi).